A 236-amino-acid polypeptide reads, in one-letter code: Uridylate kinase (236 aa).

An ATP-binding site is contributed by 8–11 (KLSG). The interval 16-21 (GEQGYG) is involved in allosteric activation by GTP. Gly51 and Arg55 together coordinate ATP. Residues Asp70 and 131-138 (TGNPYFST) contribute to the UMP site. ATP-binding residues include Asn159, Tyr165, and Asp168.

The protein belongs to the UMP kinase family. Homohexamer.

Its subcellular location is the cytoplasm. It catalyses the reaction UMP + ATP = UDP + ADP. It participates in pyrimidine metabolism; CTP biosynthesis via de novo pathway; UDP from UMP (UMPK route): step 1/1. Its activity is regulated as follows. Allosterically activated by GTP. Inhibited by UTP. Its function is as follows. Catalyzes the reversible phosphorylation of UMP to UDP. The sequence is that of Uridylate kinase from Shouchella clausii (strain KSM-K16) (Alkalihalobacillus clausii).